Consider the following 230-residue polypeptide: Complex I assembly factor TMEM126B, mitochondrial (230 aa).

Helical transmembrane passes span 70–92 (LNIH…ANLV), 107–126 (YASL…KLFV), 139–161 (SCVL…ALAF), and 196–218 (AMAI…HYNI).

Belongs to the TMEM126 family. As to quaternary structure, part of the mitochondrial complex I assembly/MCIA complex that comprises at least the core subunits TMEM126B, NDUFAF1, ECSIT and ACAD9 and complement subunits such as COA1 and TMEM186. Associates with the intermediate 370 kDa subcomplex of incompletely assembled complex I. Interacts with TMEM70.

The protein localises to the mitochondrion membrane. Functionally, as part of the MCIA complex, involved in the assembly of the mitochondrial complex I. Participates in constructing the membrane arm of complex I. The chain is Complex I assembly factor TMEM126B, mitochondrial from Mus musculus (Mouse).